Reading from the N-terminus, the 99-residue chain is uncharacterized protein (99 aa).

The chain crosses the membrane as a helical span at residues 76-96 (VLLGLASGMIGGIIGMFMWVL).

It localises to the host membrane. This is an uncharacterized protein from Haemophilus phage HP1 (strain HP1c1) (Bacteriophage HP1).